The following is a 362-amino-acid chain: MADEQFPAAATALEEYQSIEEQMASPEVVSNPDKLRKLGRRHAELGAIVDAYKAWLQVKDDLAAAQEMAGEDADFAEEAKRLEDELPGVEEKLRTALIPRDPDDARDTIMEIKAGTGGEEAALFAGDLLRMYTRYAEKRGWSVNVQSENTTELGGVKDVQIAIRAKGTPAPEDGVWASMKYEGGVHRVQRIPVTESQGRIQTSAAGVIVFPEADEDDDEIEIDPKDLKIDIFMSSGPGGQSVNTTYSAVRMTHLPTGITVNMQDEKSQIQNRAAALRVLKSRLLAMKHEQEAAEAADMRHSQVRSLDRSERIRTYNFPENRIVDHRTNYKAYNLDAVLDGDLQAVIDSDIQADEADRLANQK.

Gln-240 is modified (N5-methylglutamine).

The protein belongs to the prokaryotic/mitochondrial release factor family. Post-translationally, methylated by PrmC. Methylation increases the termination efficiency of RF1.

It localises to the cytoplasm. In terms of biological role, peptide chain release factor 1 directs the termination of translation in response to the peptide chain termination codons UAG and UAA. This Bifidobacterium longum (strain DJO10A) protein is Peptide chain release factor 1.